A 638-amino-acid chain; its full sequence is Chaperone protein HtpG (638 aa).

Residues methionine 1–arginine 346 are a; substrate-binding. Positions glutamate 347–lysine 563 are b. Positions leucine 564–lysine 638 are c.

This sequence belongs to the heat shock protein 90 family. In terms of assembly, homodimer.

The protein localises to the cytoplasm. Functionally, molecular chaperone. Has ATPase activity. In Shewanella pealeana (strain ATCC 700345 / ANG-SQ1), this protein is Chaperone protein HtpG.